Consider the following 85-residue polypeptide: Small ribosomal subunit protein bS16 (85 aa).

This sequence belongs to the bacterial ribosomal protein bS16 family.

This chain is Small ribosomal subunit protein bS16, found in Acinetobacter baylyi (strain ATCC 33305 / BD413 / ADP1).